A 497-amino-acid chain; its full sequence is Uridine 5'-monophosphate synthase (497 aa).

The segment at 8–226 (TRNGALKRNL…KLEINSELEN (219 aa)) is OPRTase. Positions 227 to 232 (LSSLPY) are domain linker. Positions 233–496 (VENVRTPLAE…WDALTRSDDS (264 aa)) are OMPdecase. Residues aspartate 271 and 293–295 (KLH) contribute to the UMP site. Lysine 293 serves as a coordination point for orotidine 5'-phosphate. Catalysis depends on for OMPdecase activity residues aspartate 324, lysine 326, and aspartate 329. Orotidine 5'-phosphate is bound by residues lysine 326, aspartate 329, threonine 333, serine 387, 446–448 (QQW), and 466–467 (GR). UMP contacts are provided by residues aspartate 329, threonine 333, serine 387, 446–448 (QQW), and 466–467 (GR).

It in the N-terminal section; belongs to the purine/pyrimidine phosphoribosyltransferase family. This sequence in the C-terminal section; belongs to the OMP decarboxylase family. Expressed in intestine and in neurons near the nerve ring and rectum.

The protein resides in the cytoplasm. The catalysed reaction is orotidine 5'-phosphate + diphosphate = orotate + 5-phospho-alpha-D-ribose 1-diphosphate. It carries out the reaction orotidine 5'-phosphate + H(+) = UMP + CO2. It functions in the pathway pyrimidine metabolism; UMP biosynthesis via de novo pathway; UMP from orotate: step 1/2. The protein operates within pyrimidine metabolism; UMP biosynthesis via de novo pathway; UMP from orotate: step 2/2. In terms of biological role, bifunctional enzyme which catalyzes the formation of UMP from orotate in the de novo pathway of pyrimidine biosynthesis. May also form UMP from uracil. Regulates the size of gut granules during embryonic development. Involved in resistance to DNA damaging agents including UV-C and X-ray radiation. In Caenorhabditis elegans, this protein is Uridine 5'-monophosphate synthase.